A 571-amino-acid polypeptide reads, in one-letter code: Urease subunit alpha (571 aa).

The Urease domain maps to Ala-133 to Ser-571. Residues His-138, His-140, and Lys-221 each contribute to the Ni(2+) site. Residue Lys-221 is modified to N6-carboxylysine. His-223 is a substrate binding site. The Ni(2+) site is built by His-250 and His-276. His-324 serves as the catalytic Proton donor. Position 364 (Asp-364) interacts with Ni(2+).

The protein belongs to the metallo-dependent hydrolases superfamily. Urease alpha subunit family. Heterotrimer of UreA (gamma), UreB (beta) and UreC (alpha) subunits. Three heterotrimers associate to form the active enzyme. Ni cation serves as cofactor. Carboxylation allows a single lysine to coordinate two nickel ions.

The protein resides in the cytoplasm. It catalyses the reaction urea + 2 H2O + H(+) = hydrogencarbonate + 2 NH4(+). Its pathway is nitrogen metabolism; urea degradation; CO(2) and NH(3) from urea (urease route): step 1/1. The polypeptide is Urease subunit alpha (Photorhabdus laumondii subsp. laumondii (strain DSM 15139 / CIP 105565 / TT01) (Photorhabdus luminescens subsp. laumondii)).